Reading from the N-terminus, the 193-residue chain is Acyl carrier protein phosphodiesterase (193 aa).

Belongs to the AcpH family.

It carries out the reaction holo-[ACP] + H2O = apo-[ACP] + (R)-4'-phosphopantetheine + H(+). Converts holo-ACP to apo-ACP by hydrolytic cleavage of the phosphopantetheine prosthetic group from ACP. This Yersinia pestis protein is Acyl carrier protein phosphodiesterase.